Reading from the N-terminus, the 856-residue chain is Facilitated trehalose transporter Tret1 (856 aa).

Disordered stretches follow at residues 1–29 and 62–202; these read MSGR…LKEK and DPFL…KATS. Residues 1-389 lie on the Cytoplasmic side of the membrane; sequence MSGRDNRGAG…LEVYRPTTNP (389 aa). The segment covering 69–80 has biased composition (polar residues); sequence VSPQRHPQTVRT. Over residues 133–142 the composition is skewed to basic and acidic residues; the sequence is EIREHRDRQQ. Polar residues predominate over residues 170–180; it reads GNSNTNSNKAA. S247, S248, S249, S319, and S321 each carry phosphoserine. The tract at residues 326 to 345 is disordered; the sequence is LTSRQHFQQQRSISTDSRKS. Over residues 329-340 the composition is skewed to polar residues; that stretch reads RQHFQQQRSIST. The chain crosses the membrane as a helical span at residues 390–410; it reads IFIWTQVIAALSVSLGSLVVG. At 411 to 439 the chain is on the extracellular side; that stretch reads FVSAYTSPALVSMSDPNITSFTVTKDAGS. A glycan (N-linked (GlcNAc...) asparagine) is linked at N427. Residues 440–460 traverse the membrane as a helical segment; that stretch reads WVGGIMPLAGLVGGVAGGPLI. Residues 461–472 are Cytoplasmic-facing; sequence EYMGRRNTILAT. Residues 473-493 traverse the membrane as a helical segment; it reads AVPFIVSSLLIACAVNVAMVL. Over 494 to 496 the chain is Extracellular; that stretch reads CGR. Residues 497-517 traverse the membrane as a helical segment; the sequence is FLAGFCVGIASLSLPVYLGET. Topologically, residues 518–527 are cytoplasmic; the sequence is VQPEVRGTLG. A helical transmembrane segment spans residues 528 to 548; it reads LLPTAFGNIGILVCFVAGSFM. N-linked (GlcNAc...) asparagine glycosylation is present at N549. Over 549–551 the chain is Extracellular; sequence NWS. Residues 552–572 traverse the membrane as a helical segment; it reads MLAFLGAALPVPFLILMFLIP. The Cytoplasmic segment spans residues 573-635; sequence ETPRWYVSRG…ELLKRNNLKP (63 aa). The helical transmembrane segment at 636-656 threads the bilayer; it reads LSISLGLMFFQQFSGINAVIF. Over 657-672 the chain is Extracellular; that stretch reads YTVQIFKDAGSTIDGN. Residues 673–693 form a helical membrane-spanning segment; sequence VCTIIVGVVNFVATFIGILLI. Topologically, residues 694–699 are cytoplasmic; that stretch reads DRAGRK. Residues 700 to 720 form a helical membrane-spanning segment; the sequence is ILLYASDIAMVLTLFVLGGFF. Residues 721-739 lie on the Extracellular side of the membrane; sequence YCKAHGPDVSHLGWLPLTC. Residues 740-760 traverse the membrane as a helical segment; it reads FVVYILGFSVGFGPIPWLMMG. Topologically, residues 761 to 766 are cytoplasmic; sequence EILPAK. A helical transmembrane segment spans residues 767–787; that stretch reads IRGAAASVATSFNWTCTFVVT. Residues 788 to 800 lie on the Extracellular side of the membrane; it reads KTFQDLVGSLGAH. The helical transmembrane segment at 801–821 threads the bilayer; it reads GAFWLFGAICFVGLFFVILYV. Topologically, residues 822–856 are cytoplasmic; that stretch reads PETQGKTLEDIERKMMGRVRRMSSVANIKPLSFNM. Phosphoserine is present on residues S844 and S845.

The protein belongs to the major facilitator superfamily. Sugar transporter (TC 2.A.1.1) family. Trehalose transporter subfamily.

Its subcellular location is the cell membrane. Low-capacity facilitative transporter for trehalose. Does not transport maltose, sucrose or lactose. Mediates the bidirectional transfer of trehalose. Responsible for the transport of trehalose synthesized in the fat body and the incorporation of trehalose into other tissues that require a carbon source, thereby regulating trehalose levels in the hemolymph. The chain is Facilitated trehalose transporter Tret1 from Drosophila yakuba (Fruit fly).